Here is a 142-residue protein sequence, read N- to C-terminus: Large-conductance mechanosensitive channel (142 aa).

2 consecutive transmembrane segments (helical) span residues 14–34 (VVDL…VSSL) and 86–106 (FGQF…VFLV).

It belongs to the MscL family. As to quaternary structure, homopentamer.

The protein localises to the cell inner membrane. Functionally, channel that opens in response to stretch forces in the membrane lipid bilayer. May participate in the regulation of osmotic pressure changes within the cell. This chain is Large-conductance mechanosensitive channel, found in Rhizorhabdus wittichii (strain DSM 6014 / CCUG 31198 / JCM 15750 / NBRC 105917 / EY 4224 / RW1) (Sphingomonas wittichii).